We begin with the raw amino-acid sequence, 396 residues long: MAKEKFERNKPHCNIGTIGHVDHGKTTLTAAITIILAKSGGATAKNYADIDAAPEEKARGITINTAHVEYETANRHYAHVDCPGHADYVKNMITGAAQMDGAILVVSAADGPMPQTREHILLARQVGVPALVVYMNKVDLVDDEELLELVEMEVRELLSSYDFPGDDIPITKGSAKVAIDGGDPVIGEQSILALMTTVDAYIPQPDRPIDLPFLMPVEDVFSISGRGTVVTGRIEKGVVKVGEEVEIVGIRAVQKTTCTGVEMFRKLLDQGQAGDNVGVLLRGTKREDVERGQVLCKPGSITPHTKFVAEAYILTKEEGGRHTPFFTNYRPQFYFRTTDVTGIIKLREGVEMIMPGDNAELDVELITPIAMDQGLRFAIREGGRTVGAGVVAKIVE.

The 197-residue stretch at lysine 10–aspartate 206 folds into the tr-type G domain. The segment at glycine 19 to threonine 26 is G1. Position 19–26 (glycine 19–threonine 26) interacts with GTP. Threonine 26 lines the Mg(2+) pocket. Residues glycine 60 to asparagine 64 are G2. A G3 region spans residues aspartate 81–glycine 84. GTP contacts are provided by residues aspartate 81–histidine 85 and asparagine 136–aspartate 139. Residues asparagine 136–aspartate 139 are G4. The segment at serine 174 to lysine 176 is G5.

This sequence belongs to the TRAFAC class translation factor GTPase superfamily. Classic translation factor GTPase family. EF-Tu/EF-1A subfamily. As to quaternary structure, monomer.

It is found in the cytoplasm. It catalyses the reaction GTP + H2O = GDP + phosphate + H(+). In terms of biological role, GTP hydrolase that promotes the GTP-dependent binding of aminoacyl-tRNA to the A-site of ribosomes during protein biosynthesis. This Caulobacter sp. (strain K31) protein is Elongation factor Tu 2.